The following is a 52-amino-acid chain: NPEDWFTPDTCAYGDSNTAWTTCTTPGQTCYTCCSSCFDVVGEQACQMSAQC.

Intrachain disulfides connect Cys11–Cys37, Cys23–Cys33, Cys30–Cys52, and Cys34–Cys46.

The protein resides in the secreted. Its function is as follows. Mating ciliate pheromones (or gamones) are diffusible extracellular communication signals that distinguish different intraspecific classes of cells commonly referred to as 'mating types'. They prepare the latter for conjugation by changing their cell surface properties. This is Mating pheromone En-1 from Euplotes nobilii (Ciliate).